Consider the following 55-residue polypeptide: uncharacterized protein (55 aa).

Over residues 1 to 15 (MVGQEQLESSPLCQH) the composition is skewed to polar residues. The segment at 1 to 26 (MVGQEQLESSPLCQHSDNETETKREC) is disordered. Basic and acidic residues predominate over residues 16–26 (SDNETETKREC).

This is an uncharacterized protein from Escherichia coli (strain K12).